Here is a 206-residue protein sequence, read N- to C-terminus: Small ribosomal subunit protein uS4 (206 aa).

An S4 RNA-binding domain is found at 96–158 (SRLDNVVYRM…AKKQSRIKAA (63 aa)).

The protein belongs to the universal ribosomal protein uS4 family. As to quaternary structure, part of the 30S ribosomal subunit. Contacts protein S5. The interaction surface between S4 and S5 is involved in control of translational fidelity.

In terms of biological role, one of the primary rRNA binding proteins, it binds directly to 16S rRNA where it nucleates assembly of the body of the 30S subunit. Its function is as follows. With S5 and S12 plays an important role in translational accuracy. The sequence is that of Small ribosomal subunit protein uS4 from Wigglesworthia glossinidia brevipalpis.